The chain runs to 255 residues: Hydroxylmethylpyrimidine kinase (255 aa).

Residues Gly18, Gln43, and Asn110 each contribute to the pyridoxal 5'-phosphate site. Position 43 (Gln43) interacts with 4-amino-5-hydroxymethyl-2-methylpyrimidine. An intrachain disulfide couples Cys195 to Cys207. A pyridoxal 5'-phosphate-binding site is contributed by Ser208.

The protein belongs to the ThiD family. In terms of assembly, homodimer. In terms of processing, crystals show a disulfide bond between Cys-195 and Cys-207. This disulfide is possibly an artifact of the purification and crystallization conditions. However, as it is adjacent to the conserved GSGC of the oxyanion hole, this disulfide may help to orient the backbone amides toward the oxanion intermediate.

The catalysed reaction is 4-amino-5-hydroxymethyl-2-methylpyrimidine + ATP = 4-amino-2-methyl-5-(phosphooxymethyl)pyrimidine + ADP + H(+). It functions in the pathway cofactor biosynthesis; thiamine diphosphate biosynthesis. With respect to regulation, inhibited by pyridoxal phosphate at high micromolar concentrations. Its function is as follows. Catalyzes the phosphorylation of hydroxymethylpyrimidine (HMP) to hydroxymethylpyrimidine phosphate (HMP-P). Unlike other HMPKs, it cannot catalyze the phosphorylation of HMP-P to generate the diphosphate HMP-PP. Shows no activity with pyridoxal, pyridoxamine or pyridoxine. Does not show phosphatase activity. The sequence is that of Hydroxylmethylpyrimidine kinase from Acinetobacter baumannii (strain IS-123).